Reading from the N-terminus, the 604-residue chain is Putative O-acetyltransferase SAV0974 (604 aa).

Transmembrane regions (helical) follow at residues 15–35, 43–63, 85–105, 150–170, 176–196, 212–232, 240–260, 267–287, 310–330, 332–352, and 377–397; these read YMPGLDGLRAIAVLGIIIYHL, GFLGVDTFFVISGYLITSLLL, LLPAVIVLLMVVGTATLLLKS, AIEEQFYIFFPVILVTLLLTI, IGFIFWGVSIISLGLMMFIYS, LQTLLLGVILAFLWPPFKLKN, YVIDSIGSLSFIVLILLFFII, IYDGGFYLISILTLFIIASVV, YSLYLWHFAVISFVHSYYVDG, IPVYVYFIDISLTIIFAELSY, and FIRMAIVVTLLIPFMLILVGA. Residues serine 459, aspartate 581, and histidine 584 contribute to the active site.

Belongs to the acyltransferase 3 family.

It is found in the cell membrane. This chain is Putative O-acetyltransferase SAV0974, found in Staphylococcus aureus (strain Mu50 / ATCC 700699).